The primary structure comprises 330 residues: Biotin synthase (330 aa).

The region spanning 55–282 (NAVQRSTLLS…TAYVRLSAGR (228 aa)) is the Radical SAM core domain. The [4Fe-4S] cluster site is built by C70, C74, and C77. The [2Fe-2S] cluster site is built by C114, C145, C205, and R277.

The protein belongs to the radical SAM superfamily. Biotin synthase family. In terms of assembly, homodimer. The cofactor is [4Fe-4S] cluster. Requires [2Fe-2S] cluster as cofactor.

It catalyses the reaction (4R,5S)-dethiobiotin + (sulfur carrier)-SH + 2 reduced [2Fe-2S]-[ferredoxin] + 2 S-adenosyl-L-methionine = (sulfur carrier)-H + biotin + 2 5'-deoxyadenosine + 2 L-methionine + 2 oxidized [2Fe-2S]-[ferredoxin]. The protein operates within cofactor biosynthesis; biotin biosynthesis; biotin from 7,8-diaminononanoate: step 2/2. Functionally, catalyzes the conversion of dethiobiotin (DTB) to biotin by the insertion of a sulfur atom into dethiobiotin via a radical-based mechanism. This Methylibium petroleiphilum (strain ATCC BAA-1232 / LMG 22953 / PM1) protein is Biotin synthase.